We begin with the raw amino-acid sequence, 391 residues long: Phosphoglycerate kinase (391 aa).

Residues 21–23 (DLN), R36, 59–62 (HLGR), R113, and R146 contribute to the substrate site. ATP-binding positions include K197, E319, and 345-348 (GGDT).

It belongs to the phosphoglycerate kinase family. In terms of assembly, monomer.

The protein resides in the cytoplasm. The enzyme catalyses (2R)-3-phosphoglycerate + ATP = (2R)-3-phospho-glyceroyl phosphate + ADP. The protein operates within carbohydrate degradation; glycolysis; pyruvate from D-glyceraldehyde 3-phosphate: step 2/5. This is Phosphoglycerate kinase from Shewanella halifaxensis (strain HAW-EB4).